A 239-amino-acid polypeptide reads, in one-letter code: MAKRSKAYLAAAEKIDADKLYSPLQAAKLAKETSSTKMDATVEVAVRLGVDPRKADQMVRGTVNLPHGTGKTARVIVFAVGEKAAEAEAAGADVVGAEDLIERIQGGWVDFDAAIATPDQMAKVGRIARVLGPRGLMPNPKTGTVTADVTKAVNDIKGGKINFRVDKQANLHFVIGKASFDDEKLVENYGAALDEILRAKPSSAKGRYVKKITVSTTTGPGIPVDPNRTRNLLEDAADA.

The protein belongs to the universal ribosomal protein uL1 family. In terms of assembly, part of the 50S ribosomal subunit.

Binds directly to 23S rRNA. The L1 stalk is quite mobile in the ribosome, and is involved in E site tRNA release. Functionally, protein L1 is also a translational repressor protein, it controls the translation of the L11 operon by binding to its mRNA. The sequence is that of Large ribosomal subunit protein uL1 from Rhodococcus erythropolis (strain PR4 / NBRC 100887).